A 247-amino-acid polypeptide reads, in one-letter code: 5'-nucleotidase SurE (247 aa).

Positions 8, 9, 39, and 91 each coordinate a divalent metal cation.

The protein belongs to the SurE nucleotidase family. A divalent metal cation is required as a cofactor.

It is found in the cytoplasm. It catalyses the reaction a ribonucleoside 5'-phosphate + H2O = a ribonucleoside + phosphate. Functionally, nucleotidase that shows phosphatase activity on nucleoside 5'-monophosphates. This Nitrosomonas eutropha (strain DSM 101675 / C91 / Nm57) protein is 5'-nucleotidase SurE.